The primary structure comprises 309 residues: Ribosomal RNA large subunit methyltransferase F (309 aa).

It belongs to the methyltransferase superfamily. METTL16/RlmF family.

It localises to the cytoplasm. It carries out the reaction adenosine(1618) in 23S rRNA + S-adenosyl-L-methionine = N(6)-methyladenosine(1618) in 23S rRNA + S-adenosyl-L-homocysteine + H(+). Its function is as follows. Specifically methylates the adenine in position 1618 of 23S rRNA. The chain is Ribosomal RNA large subunit methyltransferase F from Cronobacter sakazakii (strain ATCC BAA-894) (Enterobacter sakazakii).